The sequence spans 95 residues: Small ribosomal subunit protein uS19 (95 aa).

The protein belongs to the universal ribosomal protein uS19 family.

Functionally, protein S19 forms a complex with S13 that binds strongly to the 16S ribosomal RNA. The chain is Small ribosomal subunit protein uS19 (rpsS) from Treponema pallidum (strain Nichols).